We begin with the raw amino-acid sequence, 165 residues long: 3-isopropylmalate dehydratase small subunit (165 aa).

Belongs to the LeuD family. LeuD type 2 subfamily. In terms of assembly, heterodimer of LeuC and LeuD.

It carries out the reaction (2R,3S)-3-isopropylmalate = (2S)-2-isopropylmalate. Its pathway is amino-acid biosynthesis; L-leucine biosynthesis; L-leucine from 3-methyl-2-oxobutanoate: step 2/4. Its function is as follows. Catalyzes the isomerization between 2-isopropylmalate and 3-isopropylmalate, via the formation of 2-isopropylmaleate. This chain is 3-isopropylmalate dehydratase small subunit, found in Saccharolobus islandicus (strain Y.N.15.51 / Yellowstone #2) (Sulfolobus islandicus).